Consider the following 655-residue polypeptide: MRVFFFPNSSMAILSVFLSLLLLSLPLPSTQDLNADRTALLSLRSAVGGRTFRWNIKQTSPCNWAGVKCESNRVTALRLPGVALSGDIPEGIFGNLTQLRTLSLRLNALSGSLPKDLSTSSNLRHLYLQGNRFSGEIPEVLFSLSHLVRLNLASNSFTGEISSGFTNLTKLKTLFLENNQLSGSIPDLDLPLVQFNVSNNSLNGSIPKNLQRFESDSFLQTSLCGKPLKLCPDEETVPSQPTSGGNRTPPSVEGSEEKKKKNKLSGGAIAGIVIGCVVGFALIVLILMVLCRKKSNKRSRAVDISTIKQQEPEIPGDKEAVDNGNVYSVSAAAAAAMTGNGKASEGNGPATKKLVFFGNATKVFDLEDLLRASAEVLGKGTFGTAYKAVLDAVTVVAVKRLKDVMMADKEFKEKIELVGAMDHENLVPLRAYYFSRDEKLLVYDFMPMGSLSALLHGNRGAGRSPLNWDVRSRIAIGAARGLDYLHSQGTSTSHGNIKSSNILLTKSHDAKVSDFGLAQLVGSSATNPNRATGYRAPEVTDPKRVSQKGDVYSFGVVLLELITGKAPSNSVMNEEGVDLPRWVKSVARDEWRREVFDSELLSLATDEEEMMAEMVQLGLECTSQHPDQRPEMSEVVRKMENLRPYSGSDQVNEAD.

Positions Met1 to Asp32 are cleaved as a signal peptide. LRR repeat units follow at residues Ser71–Asn95, Gln98–Ser120, Asn122–Leu144, His146–Thr169, Lys170–Leu192, and Gln194–Ser215. The tract at residues Glu234 to Lys260 is disordered. A compositionally biased stretch (polar residues) spans Val237 to Pro249. The chain crosses the membrane as a helical span at residues Ile269–Val289. The Protein kinase domain maps to Arg371–Ser646. Position 373 is a phosphoserine (Ser373). ATP is bound at residue Leu377–Ala385. The residue at position 394 (Thr394) is a Phosphothreonine. Residue Lys399 participates in ATP binding. Residue Ser450 is modified to Phosphoserine. The residue at position 526 (Thr526) is a Phosphothreonine. Ser546 carries the phosphoserine modification. Thr622 is modified (phosphothreonine).

It belongs to the protein kinase superfamily. Highly expressed in seedlings and leaves. Lower expression in roots, stems, flowers and siliques. Detected in the vascular tissues of roots, in the trichomes of young rosettes leaves and hydathodes, in the floral abscission zones, in filament apex and stomata cells of anthers, in inflorescence stems and in sepals.

The protein localises to the cell membrane. The chain is Probable inactive receptor kinase At1g48480 (RKL1) from Arabidopsis thaliana (Mouse-ear cress).